The sequence spans 241 residues: Lactate utilization protein C (241 aa).

Belongs to the LutC/YkgG family.

Its function is as follows. Is involved in L-lactate degradation and allows cells to grow with lactate as the sole carbon source. This Geobacillus sp. (strain WCH70) protein is Lactate utilization protein C.